Consider the following 545-residue polypeptide: POTE ankyrin domain family member H (545 aa).

7 ANK repeats span residues 180 to 208, 209 to 238, 242 to 271, 275 to 304, 308 to 337, 341 to 370, and 374 to 404; these read LHRA…KKDK, QKRT…QLNI, KKRT…DPNI, YGNT…DIES, HGLT…NLNA, YGRT…DVSS, and SGQT…QILK. Residues 406–524 form a disordered region; the sequence is SSENSNPEQD…KQLSEEQNTG (119 aa). 2 stretches are compositionally biased toward basic and acidic residues: residues 414–429 and 443–458; these read QDLK…RLKG and EINK…EMKK. The segment covering 513–524 has biased composition (polar residues); it reads TQKQLSEEQNTG.

It belongs to the POTE family.

In Homo sapiens (Human), this protein is POTE ankyrin domain family member H (POTEH).